A 188-amino-acid chain; its full sequence is Adenylate kinase (188 aa).

12–17 (GVGKGT) is an ATP binding site. Positions 32-61 (STGDIFRSAMANHTELGDKAKSFMDAGNLV) are NMP. AMP is bound by residues threonine 33, arginine 38, 59-61 (NLV), 89-92 (GYPR), and glutamine 96. Positions 130-136 (GRGREDD) are LID. Arginine 131 lines the ATP pocket. AMP contacts are provided by arginine 133 and arginine 144. Residue glycine 172 coordinates ATP.

Belongs to the adenylate kinase family. Monomer.

The protein resides in the cytoplasm. The enzyme catalyses AMP + ATP = 2 ADP. It participates in purine metabolism; AMP biosynthesis via salvage pathway; AMP from ADP: step 1/1. Its function is as follows. Catalyzes the reversible transfer of the terminal phosphate group between ATP and AMP. Plays an important role in cellular energy homeostasis and in adenine nucleotide metabolism. The chain is Adenylate kinase from Oenococcus oeni (strain ATCC BAA-331 / PSU-1).